The chain runs to 537 residues: Light-independent protochlorophyllide reductase subunit B (537 aa).

[4Fe-4S] cluster is bound at residue Asp-36. Asp-292 acts as the Proton donor in catalysis. 428–429 provides a ligand contact to substrate; that stretch reads GL. The segment at 459–483 is disordered; sequence TAGETAGQATEAATAPATPGAPLTG.

This sequence belongs to the ChlB/BchB/BchZ family. As to quaternary structure, protochlorophyllide reductase is composed of three subunits; BchL, BchN and BchB. Forms a heterotetramer of two BchB and two BchN subunits. [4Fe-4S] cluster is required as a cofactor.

The catalysed reaction is chlorophyllide a + oxidized 2[4Fe-4S]-[ferredoxin] + 2 ADP + 2 phosphate = protochlorophyllide a + reduced 2[4Fe-4S]-[ferredoxin] + 2 ATP + 2 H2O. It participates in porphyrin-containing compound metabolism; bacteriochlorophyll biosynthesis (light-independent). Component of the dark-operative protochlorophyllide reductase (DPOR) that uses Mg-ATP and reduced ferredoxin to reduce ring D of protochlorophyllide (Pchlide) to form chlorophyllide a (Chlide). This reaction is light-independent. The NB-protein (BchN-BchB) is the catalytic component of the complex. The sequence is that of Light-independent protochlorophyllide reductase subunit B from Chloroherpeton thalassium (strain ATCC 35110 / GB-78).